Here is a 299-residue protein sequence, read N- to C-terminus: 4-hydroxy-tetrahydrodipicolinate synthase (299 aa).

Thr47 is a pyruvate binding site. The active-site Proton donor/acceptor is the Tyr136. Lys164 acts as the Schiff-base intermediate with substrate in catalysis. Position 205 (Ala205) interacts with pyruvate.

Belongs to the DapA family. In terms of assembly, homotetramer; dimer of dimers.

It localises to the cytoplasm. The catalysed reaction is L-aspartate 4-semialdehyde + pyruvate = (2S,4S)-4-hydroxy-2,3,4,5-tetrahydrodipicolinate + H2O + H(+). Its pathway is amino-acid biosynthesis; L-lysine biosynthesis via DAP pathway; (S)-tetrahydrodipicolinate from L-aspartate: step 3/4. Its function is as follows. Catalyzes the condensation of (S)-aspartate-beta-semialdehyde [(S)-ASA] and pyruvate to 4-hydroxy-tetrahydrodipicolinate (HTPA). The chain is 4-hydroxy-tetrahydrodipicolinate synthase from Pediococcus pentosaceus (strain ATCC 25745 / CCUG 21536 / LMG 10740 / 183-1w).